An 875-amino-acid chain; its full sequence is Protein SEY1 (875 aa).

Residues 1 to 749 (MVANGHFASN…KRSAIGGITQ (749 aa)) are Cytoplasmic-facing. The GB1/RHD3-type G domain maps to 49-307 (GFNYHLISVF…IPADGFAVYA (259 aa)). 59–66 (GSQSTGKS) is a GTP binding site. Positions 482 to 506 (SNYQQELSLYQKDLERISGQLRRDE) form a coiled coil. A disordered region spans residues 676-704 (LDKWIGHTPSSATPADEEDLTPIGGVDED). Residues 690 to 704 (ADEEDLTPIGGVDED) are compositionally biased toward acidic residues. Residues 750 to 770 (VPLYFYGLLLALGWNEIMAVL) form a helical membrane-spanning segment. Topologically, residues 771–773 (RNP) are lumenal. The chain crosses the membrane as a helical span at residues 774–794 (AYFFLLFVCAIGAYVTYQLNL). Over 795–875 (WGPIIKMTEA…ADDDDVDDDF (81 aa)) the chain is Cytoplasmic. Residues 831 to 875 (MAMSGARNATEEHEMSNLNRKSGERGGQKYRGEDVADDDDVDDDF) form a disordered region. The segment covering 839 to 864 (ATEEHEMSNLNRKSGERGGQKYRGED) has biased composition (basic and acidic residues). Positions 865–875 (VADDDDVDDDF) are enriched in acidic residues.

Belongs to the TRAFAC class dynamin-like GTPase superfamily. GB1/RHD3 GTPase family. RHD3 subfamily.

The protein localises to the endoplasmic reticulum membrane. In terms of biological role, cooperates with the reticulon proteins and tubule-shaping DP1 family proteins to generate and maintain the structure of the tubular endoplasmic reticulum network. Has GTPase activity, which is required for its function in ER organization. This Ajellomyces dermatitidis (strain ER-3 / ATCC MYA-2586) (Blastomyces dermatitidis) protein is Protein SEY1.